We begin with the raw amino-acid sequence, 577 residues long: Outer spore wall assembly protein SHE10 (577 aa).

The N-terminal stretch at 1–23 (MGKLIKLITTLTVLVSLLQYCCE) is a signal peptide. Coiled-coil stretches lie at residues 379–416 (NETR…ENVE) and 513–561 (ILRS…EEDV). Basic and acidic residues predominate over residues 525 to 545 (RERKERERKEREKAAAEEFQR). The disordered stretch occupies residues 525-577 (RERKERERKEREKAAAEEFQRQQELLRQQEEEDEEDVSYTSTSTITTTTTMTL). Residues 562-577 (SYTSTSTITTTTTMTL) show a composition bias toward low complexity.

The protein belongs to the SHE10 family. As to quaternary structure, component of the mitochondria-localized RNase mitochondrial RNA-processing (RNase MRP) composed of one single RNA encoded by the NME1 gene and at least 31 proteins. Absent in the nucleus-localized RNase MRP (NuMRP).

The protein resides in the mitochondrion. Involved in spore wall assembly. May be a component of the mitochondrial RNase MRP (MtMRP), a ribonucleoprotein endoribonuclease involved in the cleaving RNA transcripts to generate primers for DNA replication in mitochondria. In Saccharomyces cerevisiae (strain Lalvin EC1118 / Prise de mousse) (Baker's yeast), this protein is Outer spore wall assembly protein SHE10.